The following is a 276-amino-acid chain: Large ribosomal subunit protein uL2 (276 aa).

The disordered stretch occupies residues 221-276 (RGSAMNPNDHPHGGGEGRAPIGRKSPMTPWGKKARGVKTRDRKKASNALIIRRRTK). Basic residues predominate over residues 252-276 (KKARGVKTRDRKKASNALIIRRRTK).

It belongs to the universal ribosomal protein uL2 family. As to quaternary structure, part of the 50S ribosomal subunit. Forms a bridge to the 30S subunit in the 70S ribosome.

Its function is as follows. One of the primary rRNA binding proteins. Required for association of the 30S and 50S subunits to form the 70S ribosome, for tRNA binding and peptide bond formation. It has been suggested to have peptidyltransferase activity; this is somewhat controversial. Makes several contacts with the 16S rRNA in the 70S ribosome. This Onion yellows phytoplasma (strain OY-M) protein is Large ribosomal subunit protein uL2.